The following is a 184-amino-acid chain: Large ribosomal subunit protein uL22B (184 aa).

Lys-46 participates in a covalent cross-link: Glycyl lysine isopeptide (Lys-Gly) (interchain with G-Cter in ubiquitin). Phosphothreonine is present on Thr-70.

This sequence belongs to the universal ribosomal protein uL22 family. As to quaternary structure, component of the large ribosomal subunit (LSU). Mature yeast ribosomes consist of a small (40S) and a large (60S) subunit. The 40S small subunit contains 1 molecule of ribosomal RNA (18S rRNA) and 33 different proteins (encoded by 57 genes). The large 60S subunit contains 3 rRNA molecules (25S, 5.8S and 5S rRNA) and 46 different proteins (encoded by 81 genes). uL22 is associated with the polypeptide exit tunnel.

It localises to the cytoplasm. Its function is as follows. Component of the ribosome, a large ribonucleoprotein complex responsible for the synthesis of proteins in the cell. The small ribosomal subunit (SSU) binds messenger RNAs (mRNAs) and translates the encoded message by selecting cognate aminoacyl-transfer RNA (tRNA) molecules. The large subunit (LSU) contains the ribosomal catalytic site termed the peptidyl transferase center (PTC), which catalyzes the formation of peptide bonds, thereby polymerizing the amino acids delivered by tRNAs into a polypeptide chain. The nascent polypeptides leave the ribosome through a tunnel in the LSU and interact with protein factors that function in enzymatic processing, targeting, and the membrane insertion of nascent chains at the exit of the ribosomal tunnel. This Saccharomyces cerevisiae (strain ATCC 204508 / S288c) (Baker's yeast) protein is Large ribosomal subunit protein uL22B.